The chain runs to 465 residues: Midnolin (465 aa).

One can recognise a Ubiquitin-like domain in the interval 32-106; the sequence is MSLAIHSTTG…LTLVPTVEAG (75 aa). 2 disordered regions span residues 185–262 and 400–445; these read SVAT…SRKP and RLRR…GLDF. Composition is skewed to low complexity over residues 195–219 and 240–257; these read RPVSSAARVPPVSSSPSSPVSPSPV and SPPASSSSTSTPGSSPTP. Residues 397–424 form a required for nucleolar localization region; that stretch reads QQKRLRRKARRDARGPYHWTPSRKAGRS.

Interacts with GCK; the interaction occurs preferentially at low glucose levels. Interacts with the proteasome. As to expression, expressed at high levels in brain and liver with significantly lower levels in muscle.

It localises to the nucleus. It is found in the cytoplasm. Its subcellular location is the cytosol. The protein localises to the nucleolus. Facilitates the ubiquitin-independent proteasomal degradation of stimulus-induced transcription factors such as FOSB, EGR1, NR4A1, and IRF4 to the proteasome for degradation. Promotes also the degradation of other substrates such as CBX4. Plays a role in inhibiting the activity of glucokinase GCK and both glucose-induced and basal insulin secretion. The sequence is that of Midnolin (Midn) from Mus musculus (Mouse).